The primary structure comprises 391 residues: DNA-directed RNA polymerase subunit Rpo1C (391 aa).

Belongs to the RNA polymerase beta' chain family. Part of the RNA polymerase complex.

The protein resides in the cytoplasm. The protein localises to the chromosome. It carries out the reaction RNA(n) + a ribonucleoside 5'-triphosphate = RNA(n+1) + diphosphate. Its function is as follows. DNA-dependent RNA polymerase (RNAP) catalyzes the transcription of DNA into RNA using the four ribonucleoside triphosphates as substrates. Forms part of the jaw domain. The protein is DNA-directed RNA polymerase subunit Rpo1C of Thermococcus kodakarensis (strain ATCC BAA-918 / JCM 12380 / KOD1) (Pyrococcus kodakaraensis (strain KOD1)).